Consider the following 153-residue polypeptide: UPF0260 protein CKO_01185 (153 aa).

Belongs to the UPF0260 family.

In Citrobacter koseri (strain ATCC BAA-895 / CDC 4225-83 / SGSC4696), this protein is UPF0260 protein CKO_01185.